The chain runs to 156 residues: Histone H2B.2 (156 aa).

Composition is skewed to basic and acidic residues over residues 1–10 (MAPKKDEKPA) and 24–58 (AKAE…GEKK). Positions 1 to 63 (MAPKKDEKPA…DGEKKDKKKK (63 aa)) are disordered. 2 positions are modified to N6-acetyllysine: Lys40 and Lys41. Lys152 participates in a covalent cross-link: Glycyl lysine isopeptide (Lys-Gly) (interchain with G-Cter in ubiquitin).

This sequence belongs to the histone H2B family. In terms of assembly, the nucleosome is a histone octamer containing two molecules each of H2A, H2B, H3 and H4 assembled in one H3-H4 heterotetramer and two H2A-H2B heterodimers. The octamer wraps approximately 147 bp of DNA. The N-terminus is blocked. Post-translationally, can be acetylated to form H2BK33ac and H2BK34ac. Acetylated mainly on the ubiquitinated form. In terms of processing, monoubiquitinated to form H2BK143ub1; which is increased during the light period and may give a specific tag for epigenetic transcriptional activation.

Its subcellular location is the nucleus. The protein resides in the chromosome. In terms of biological role, core component of nucleosome. Nucleosomes wrap and compact DNA into chromatin, limiting DNA accessibility to the cellular machineries which require DNA as a template. Histones thereby play a central role in transcription regulation, DNA repair, DNA replication and chromosomal stability. DNA accessibility is regulated via a complex set of post-translational modifications of histones, also called histone code, and nucleosome remodeling. The protein is Histone H2B.2 of Chlamydomonas reinhardtii (Chlamydomonas smithii).